Consider the following 298-residue polypeptide: Probable endonuclease 4 (298 aa).

Histidine 70, histidine 111, glutamate 146, aspartate 180, histidine 183, histidine 215, aspartate 228, histidine 230, and glutamate 260 together coordinate Zn(2+).

This sequence belongs to the AP endonuclease 2 family. Zn(2+) is required as a cofactor.

It carries out the reaction Endonucleolytic cleavage to 5'-phosphooligonucleotide end-products.. Its function is as follows. Endonuclease IV plays a role in DNA repair. It cleaves phosphodiester bonds at apurinic or apyrimidinic (AP) sites, generating a 3'-hydroxyl group and a 5'-terminal sugar phosphate. The protein is Probable endonuclease 4 of Halalkalibacterium halodurans (strain ATCC BAA-125 / DSM 18197 / FERM 7344 / JCM 9153 / C-125) (Bacillus halodurans).